A 531-amino-acid chain; its full sequence is Peptide chain release factor 3 (531 aa).

Residues 10-278 enclose the tr-type G domain; the sequence is ARRRTFAIIS…DFVEHAPGPL (269 aa). Residues 19–26, 87–91, and 141–144 contribute to the GTP site; these read SHPDAGKT, DTPGH, and NKLD.

This sequence belongs to the TRAFAC class translation factor GTPase superfamily. Classic translation factor GTPase family. PrfC subfamily.

It is found in the cytoplasm. Increases the formation of ribosomal termination complexes and stimulates activities of RF-1 and RF-2. It binds guanine nucleotides and has strong preference for UGA stop codons. It may interact directly with the ribosome. The stimulation of RF-1 and RF-2 is significantly reduced by GTP and GDP, but not by GMP. The polypeptide is Peptide chain release factor 3 (Thioalkalivibrio sulfidiphilus (strain HL-EbGR7)).